The chain runs to 352 residues: Photosystem II D2 protein (352 aa).

At Thr2 the chain carries N-acetylthreonine. Phosphothreonine is present on Thr2. The chain crosses the membrane as a helical span at residues 40–60 (TAYLALGGWFTGTTFVTSWYT). His117 is a binding site for chlorophyll a. A helical membrane pass occupies residues 124-140 (GFMLRQFEIARSVKIRP). Gln129 and Asn142 together coordinate pheophytin a. A helical transmembrane segment spans residues 152 to 165 (VFVSVFLIYPLGQS). His197 serves as a coordination point for chlorophyll a. A helical membrane pass occupies residues 207-227 (AALLCAIHGATVENTLFEDGD). A plastoquinone contacts are provided by His214 and Phe261. A Fe cation-binding site is contributed by His214. Position 268 (His268) interacts with Fe cation. A helical membrane pass occupies residues 278–294 (GLWMSAIGVVGLALNLR).

It belongs to the reaction center PufL/M/PsbA/D family. PSII is composed of 1 copy each of membrane proteins PsbA, PsbB, PsbC, PsbD, PsbE, PsbF, PsbH, PsbI, PsbJ, PsbK, PsbL, PsbM, PsbT, PsbX, PsbY, PsbZ, Psb30/Ycf12, at least 3 peripheral proteins of the oxygen-evolving complex and a large number of cofactors. It forms dimeric complexes. The cofactor is The D1/D2 heterodimer binds P680, chlorophylls that are the primary electron donor of PSII, and subsequent electron acceptors. It shares a non-heme iron and each subunit binds pheophytin, quinone, additional chlorophylls, carotenoids and lipids. There is also a Cl(-1) ion associated with D1 and D2, which is required for oxygen evolution. The PSII complex binds additional chlorophylls, carotenoids and specific lipids..

Its subcellular location is the plastid. It localises to the chloroplast thylakoid membrane. The catalysed reaction is 2 a plastoquinone + 4 hnu + 2 H2O = 2 a plastoquinol + O2. Its function is as follows. Photosystem II (PSII) is a light-driven water:plastoquinone oxidoreductase that uses light energy to abstract electrons from H(2)O, generating O(2) and a proton gradient subsequently used for ATP formation. It consists of a core antenna complex that captures photons, and an electron transfer chain that converts photonic excitation into a charge separation. The D1/D2 (PsbA/PsbD) reaction center heterodimer binds P680, the primary electron donor of PSII as well as several subsequent electron acceptors. D2 is needed for assembly of a stable PSII complex. This is Photosystem II D2 protein from Chlorella vulgaris (Green alga).